The following is a 454-amino-acid chain: Pyrimidine/purine nucleotide 5'-monophosphate nucleosidase (454 aa).

Belongs to the LOG family.

The enzyme catalyses a pyrimidine ribonucleoside 5'-phosphate + H2O = a pyrimidine nucleobase + D-ribose 5-phosphate. It carries out the reaction AMP + H2O = adenine + D-ribose 5-phosphate. The catalysed reaction is GMP + H2O = guanine + D-ribose 5-phosphate. It catalyses the reaction CMP + H2O = cytosine + D-ribose 5-phosphate. The enzyme catalyses IMP + H2O = hypoxanthine + D-ribose 5-phosphate. It carries out the reaction UMP + H2O = D-ribose 5-phosphate + uracil. The catalysed reaction is dTMP + H2O = 2-deoxy-D-ribose 5-phosphate + thymine. Catalyzes the hydrolysis of the N-glycosidic bond of diverse pyrimidine and purine nucleotide 5'-monophosphates, to form ribose 5-phosphate and the corresponding free base. Can use AMP, GMP, IMP, CMP, dTMP and UMP as substrates. Cannot catalyze the reverse reactions. May contribute to nucleoside pool homeostasis by degrading excess nucleotides and feeding back the ribose moiety to catabolism. The chain is Pyrimidine/purine nucleotide 5'-monophosphate nucleosidase from Escherichia coli O157:H7.